The following is a 178-amino-acid chain: MEQFHGTTIVSVRRGDKVALGGDGQVTLGNIVMKGGARKVRRIYNNQVLVGFAGGTADAFSLLDRFEAKLEKHQGNLTRAAVELAKDWRTDRMLRRLEAMLITADATTTLVITGNGDVLDPEGGICAIGSGGAYAQAAARALVENTDLSPREIVEKSLGIAGDMCIYTNHNRIIETIE.

T7 is a catalytic residue. Na(+) contacts are provided by G162, C165, and T168.

Belongs to the peptidase T1B family. HslV subfamily. In terms of assembly, a double ring-shaped homohexamer of HslV is capped on each side by a ring-shaped HslU homohexamer. The assembly of the HslU/HslV complex is dependent on binding of ATP.

Its subcellular location is the cytoplasm. The catalysed reaction is ATP-dependent cleavage of peptide bonds with broad specificity.. Its activity is regulated as follows. Allosterically activated by HslU binding. Functionally, protease subunit of a proteasome-like degradation complex believed to be a general protein degrading machinery. In Burkholderia cenocepacia (strain ATCC BAA-245 / DSM 16553 / LMG 16656 / NCTC 13227 / J2315 / CF5610) (Burkholderia cepacia (strain J2315)), this protein is ATP-dependent protease subunit HslV.